The chain runs to 539 residues: Chaperonin GroEL (539 aa).

ATP contacts are provided by residues 29 to 32, 86 to 90, G413, 477 to 479, and D493; these read TLGP, DGTTT, and DAL.

Belongs to the chaperonin (HSP60) family. In terms of assembly, forms a cylinder of 14 subunits composed of two heptameric rings stacked back-to-back. Interacts with the co-chaperonin GroES.

It localises to the cytoplasm. The enzyme catalyses ATP + H2O + a folded polypeptide = ADP + phosphate + an unfolded polypeptide.. Functionally, together with its co-chaperonin GroES, plays an essential role in assisting protein folding. The GroEL-GroES system forms a nano-cage that allows encapsulation of the non-native substrate proteins and provides a physical environment optimized to promote and accelerate protein folding. This chain is Chaperonin GroEL, found in Clostridium perfringens (strain ATCC 13124 / DSM 756 / JCM 1290 / NCIMB 6125 / NCTC 8237 / Type A).